Here is a 78-residue protein sequence, read N- to C-terminus: RNA-binding protein Hfq (78 aa).

Residues 10–69 (DPFLNALRKEHVPVSIYLVNGIKLQGNIESFDQYVVLLRNTVTQMVYKHAISTVVPARPV) form the Sm domain.

This sequence belongs to the Hfq family. Homohexamer.

Its function is as follows. RNA chaperone that binds small regulatory RNA (sRNAs) and mRNAs to facilitate mRNA translational regulation in response to envelope stress, environmental stress and changes in metabolite concentrations. Also binds with high specificity to tRNAs. This chain is RNA-binding protein Hfq, found in Paraburkholderia phymatum (strain DSM 17167 / CIP 108236 / LMG 21445 / STM815) (Burkholderia phymatum).